The sequence spans 669 residues: DNA mismatch repair protein MutL (669 aa).

Disordered stretches follow at residues 354–402 (NRPA…ENPY) and 448–479 (TVSHDSPPNRTAPDATTSSSKPRAPIESPLES). The segment covering 448–468 (TVSHDSPPNRTAPDATTSSSK) has biased composition (polar residues).

It belongs to the DNA mismatch repair MutL/HexB family.

In terms of biological role, this protein is involved in the repair of mismatches in DNA. It is required for dam-dependent methyl-directed DNA mismatch repair. May act as a 'molecular matchmaker', a protein that promotes the formation of a stable complex between two or more DNA-binding proteins in an ATP-dependent manner without itself being part of a final effector complex. This is DNA mismatch repair protein MutL from Pectobacterium carotovorum subsp. carotovorum (strain PC1).